The following is a 146-amino-acid chain: Anti-sigma F factor (146 aa).

It belongs to the anti-sigma-factor family.

It carries out the reaction L-seryl-[protein] + ATP = O-phospho-L-seryl-[protein] + ADP + H(+). It catalyses the reaction L-threonyl-[protein] + ATP = O-phospho-L-threonyl-[protein] + ADP + H(+). Functionally, binds to sigma F and blocks its ability to form an RNA polymerase holoenzyme (E-sigma F). Phosphorylates SpoIIAA on a serine residue. This phosphorylation may enable SpoIIAA to act as an anti-anti-sigma factor that counteracts SpoIIAB and thus releases sigma F from inhibition. This chain is Anti-sigma F factor, found in Oceanobacillus iheyensis (strain DSM 14371 / CIP 107618 / JCM 11309 / KCTC 3954 / HTE831).